The chain runs to 202 residues: Orotate phosphoribosyltransferase (202 aa).

Residues Lys93 and Glu113–Ser121 contribute to the 5-phospho-alpha-D-ribose 1-diphosphate site. Residues Thr117 and Arg145 each coordinate orotate.

Belongs to the purine/pyrimidine phosphoribosyltransferase family. PyrE subfamily. In terms of assembly, homodimer. The cofactor is Mg(2+).

It carries out the reaction orotidine 5'-phosphate + diphosphate = orotate + 5-phospho-alpha-D-ribose 1-diphosphate. Its pathway is pyrimidine metabolism; UMP biosynthesis via de novo pathway; UMP from orotate: step 1/2. Its function is as follows. Catalyzes the transfer of a ribosyl phosphate group from 5-phosphoribose 1-diphosphate to orotate, leading to the formation of orotidine monophosphate (OMP). The chain is Orotate phosphoribosyltransferase from Campylobacter jejuni subsp. jejuni serotype O:23/36 (strain 81-176).